The chain runs to 551 residues: Endolytic murein transglycosylase (551 aa).

Topologically, residues 1–187 are cytoplasmic; sequence MSEKSREEEK…PKKEKKSHVK (187 aa). The disordered stretch occupies residues 38–180; that stretch reads VRTPANEPSA…EGAKPAKPKK (143 aa). Composition is skewed to low complexity over residues 100 to 110 and 145 to 157; these read PSSPAEESGSR and QAGP…ATET. A compositionally biased stretch (basic and acidic residues) spans 159–174; that stretch reads DIIRDTSRRSRREGAK. Residues 188 to 208 form a helical membrane-spanning segment; the sequence is AFVISFLVFLALLSAGGYFGY. The Extracellular segment spans residues 209–551; that stretch reads QYVLDSLLPI…VAEHVNSKLN (343 aa).

This sequence belongs to the transglycosylase MltG family.

The protein resides in the cell membrane. It catalyses the reaction a peptidoglycan chain = a peptidoglycan chain with N-acetyl-1,6-anhydromuramyl-[peptide] at the reducing end + a peptidoglycan chain with N-acetylglucosamine at the non-reducing end.. In terms of biological role, functions as a peptidoglycan terminase that cleaves nascent peptidoglycan strands endolytically to terminate their elongation. Involved in peripheral peptidoglycan (PG) synthesis. The chain is Endolytic murein transglycosylase from Streptococcus pneumoniae serotype 2 (strain D39 / NCTC 7466).